A 626-amino-acid polypeptide reads, in one-letter code: Two-component response regulator ORR24 (626 aa).

The interval 1–22 (MTVEERQGRVGGHGVSGGGGGR) is disordered. A compositionally biased stretch (gly residues) spans 9-22 (RVGGHGVSGGGGGR). The 116-residue stretch at 30–145 (RVLAVDDDPT…QLRTIWQHVI (116 aa)) folds into the Response regulatory domain. The residue at position 81 (aspartate 81) is a 4-aspartylphosphate. Positions 151 to 162 (DAKNRGNDDDAG) are enriched in basic and acidic residues. Disordered stretches follow at residues 151-215 (DAKN…KKPR) and 400-440 (LQPL…RTTN). Positions 191 to 202 (NGDDGDDSDENS) are enriched in acidic residues. Residues 210 to 269 (TQKKPRVVWSVELHRKFVAAVNQLGIEKAVPKKILDLMNVENITRENVASHLQKYRLYLK) constitute a DNA-binding region (myb-like GARP). Residues 400-421 (LQPLESSSQQHLSRVHSSSADP) are compositionally biased toward polar residues.

It belongs to the ARR family. Type-B subfamily. Post-translationally, two-component system major event consists of a His-to-Asp phosphorelay between a sensor histidine kinase (HK) and a response regulator (RR). In plants, the His-to-Asp phosphorelay involves an additional intermediate named Histidine-containing phosphotransfer protein (HPt). This multistep phosphorelay consists of a His-Asp-His-Asp sequential transfer of a phosphate group between first a His and an Asp of the HK protein, followed by the transfer to a conserved His of the HPt protein and finally the transfer to an Asp in the receiver domain of the RR protein.

It localises to the nucleus. In terms of biological role, transcriptional activator that binds specific DNA sequence. Functions as a response regulator involved in His-to-Asp phosphorelay signal transduction system. Phosphorylation of the Asp residue in the receiver domain activates the ability of the protein to promote the transcription of target genes. May directly activate some type-A response regulators in response to cytokinins. The sequence is that of Two-component response regulator ORR24 from Oryza sativa subsp. indica (Rice).